We begin with the raw amino-acid sequence, 336 residues long: Fimbrial adhesin PapGII (336 aa).

The N-terminal stretch at 1 to 20 (MKKWFPALLFSLCVSGESSA) is a signal peptide. Disulfide bonds link Cys-64/Cys-138 and Cys-217/Cys-249. Residues Glu-79 and 124–127 (GYKW) contribute to the D-galactose site.

Belongs to the adhesin PapG family.

It is found in the secreted. The protein localises to the fimbrium. Functionally, tip adhesin component of type P pili that plays a critical role in kidney infection through targeted interaction with the globoseries glycolipids containing the Gal-alpha(1-4)-Gal disaccharide present on uroepithelial cells. In turn, transcriptionally regulates host gene expression in kidney cells, leading to inflammatory pathway activation and renal tissue damage. Acts thereby as key determinant of invasive uropathogenic E.coli (UPEC), which cause pyelonephritis and urinary-source bacteremia. The chain is Fimbrial adhesin PapGII from Escherichia coli.